We begin with the raw amino-acid sequence, 181 residues long: Germinal center-associated signaling and motility protein (181 aa).

Serine 102 is modified (phosphoserine). Residues 117 to 128 (AERHKESSRGTE) show a composition bias toward basic and acidic residues. The disordered stretch occupies residues 117–181 (AERHKESSRG…PYETHFSYPQ (65 aa)). Tyrosine 150 is modified (phosphotyrosine).

As to quaternary structure, interacts with ACTB and MYH2; the interaction with MYH2 is increased by IL6-induced phosphorylation. Interacts (via C-terminus) with ARHGEF11 (via DH domain). Interacts with ARHGEF12. Interacts with SYK; the interaction increases after B-cell receptor stimulation, resulting in enhanced SYK autophosphorylation and activity. Post-translationally, phosphorylation on tyrosine residues can be induced by IL6. Phosphorylation is mediated by LYN. In terms of processing, targeted by the ubiquitin E3 ligase subunit FBXO10 to mediate its ubiquitination and degradation. Highly expressed in normal germinal center (GC) B-cells. Expressed in spleen and, to a lesser extent, bone marrow.

Its subcellular location is the cytoplasm. The protein resides in the cell membrane. Functionally, involved in the negative regulation of lymphocyte motility. It mediates the migration-inhibitory effects of IL6. Serves as a positive regulator of the RhoA signaling pathway. Enhancement of RhoA activation results in inhibition of lymphocyte and lymphoma cell motility by activation of its downstream effector ROCK. Is a regulator of B-cell receptor signaling, that acts through SYK kinase activation. The chain is Germinal center-associated signaling and motility protein (Gcsam) from Mus musculus (Mouse).